The chain runs to 574 residues: MSSGIVLLIVAIVLVVIIAYLIAIIIRKRNDSLITKLEERKQNLFDLPVNDEIEEVKKLHLIGQSQTTFREWNQKWVDLSLNSFSDIENHIFEAENLNDTFNFIRAHSQINNIESQLNLAEEDIKAIREALAVLKEQEEKNSARVLHALEMYESLQASIEEGDSNFGITMPEIEKQLKNIEAEFSQFVTLNSSGDPVEASEILDRAEEHTIALGQMTEKIPAIVAKLEDDFPDQLDDLESGYRRLLEENYHFPEKNIEERFQEVREAIGNNSNELVSLDLDKAESENEAIQEKIDSLYDIFEREIRAHKNIVKSKKIIPAYLEHAKKNNEQLEAEIERLNHRYILNEKEELNVRDFNEEIASVEKDVLPIIENFDTQEKPFSVLEDKFDRAIKKLDLVEEGQLDVFNSLKNIENVEKTARQKLDSYINRLHAIKRFMEKRNLPGIPQDFLSVFFTTSAQLEALMDELNRARIHIETVNRMTEAATAAVENLEETAYRVVQNATLTEQLLQYSNRYRSFEPSVQESFDIALKLFETDYDYQGSFDEISYSLETVEPGVTDRFVSSYEKTRETIRF.

The Extracellular segment spans residues 1–7; it reads MSSGIVL. The helical transmembrane segment at 8 to 26 threads the bilayer; that stretch reads LIVAIVLVVIIAYLIAIII. The Cytoplasmic portion of the chain corresponds to 27–574; that stretch reads RKRNDSLITK…YEKTRETIRF (548 aa). Coiled coils occupy residues 102 to 141, 255 to 368, and 409 to 495; these read NFIR…EEKN, KNIE…KDVL, and LKNI…EETA.

The protein belongs to the EzrA family.

Its subcellular location is the cell membrane. Functionally, negative regulator of FtsZ ring formation; modulates the frequency and position of FtsZ ring formation. Inhibits FtsZ ring formation at polar sites. Interacts either with FtsZ or with one of its binding partners to promote depolymerization. In Streptococcus mutans serotype c (strain ATCC 700610 / UA159), this protein is Septation ring formation regulator EzrA.